The following is a 301-amino-acid chain: Acetylglutamate kinase (301 aa).

Substrate is bound by residues Gly68–Gly69, Arg90, and Asn195.

This sequence belongs to the acetylglutamate kinase family. ArgB subfamily.

It is found in the cytoplasm. It carries out the reaction N-acetyl-L-glutamate + ATP = N-acetyl-L-glutamyl 5-phosphate + ADP. It functions in the pathway amino-acid biosynthesis; L-arginine biosynthesis; N(2)-acetyl-L-ornithine from L-glutamate: step 2/4. Functionally, catalyzes the ATP-dependent phosphorylation of N-acetyl-L-glutamate. The polypeptide is Acetylglutamate kinase (Pseudomonas aeruginosa (strain LESB58)).